Consider the following 568-residue polypeptide: Urease subunit alpha (568 aa).

A Urease domain is found at glycine 130 to phenylalanine 568. Positions 135, 137, and 218 each coordinate Ni(2+). Residue lysine 218 is modified to N6-carboxylysine. A substrate-binding site is contributed by histidine 220. Positions 247 and 273 each coordinate Ni(2+). Residue histidine 321 is the Proton donor of the active site. Aspartate 361 is a binding site for Ni(2+).

The protein belongs to the metallo-dependent hydrolases superfamily. Urease alpha subunit family. As to quaternary structure, heterotrimer of UreA (gamma), UreB (beta) and UreC (alpha) subunits. Three heterotrimers associate to form the active enzyme. Requires Ni cation as cofactor. Post-translationally, carboxylation allows a single lysine to coordinate two nickel ions.

The protein localises to the cytoplasm. The enzyme catalyses urea + 2 H2O + H(+) = hydrogencarbonate + 2 NH4(+). It functions in the pathway nitrogen metabolism; urea degradation; CO(2) and NH(3) from urea (urease route): step 1/1. The chain is Urease subunit alpha from Burkholderia multivorans (strain ATCC 17616 / 249).